A 981-amino-acid polypeptide reads, in one-letter code: Protein deadlock (981 aa).

The tract at residues 1-60 (MEKLDKIRMSQKLSCWQHILTTLGTSSKTEQEWNTFFKGFLESWRKPYCIQTSCDPSIPL) is required for interaction with rhi/rhino. 6 disordered regions span residues 72 to 195 (LQEN…ACAP), 274 to 307 (IMDKPKNKQQPQTPPPFLLNNEYTESSDDSDDQL), 327 to 352 (SRNEDCSPAPEKVKLKGERPAQNKKE), 375 to 446 (LRKS…PNNI), 554 to 586 (GLDDENVPEDEPRKEAKTAEQLPKPEPSTETLK), and 642 to 662 (LVHQPLAESNRNQRDEATAAR). Polar residues-rich tracts occupy residues 104–113 (PSKSHSTGST) and 150–160 (NHTTSIFSKAQ). Residues 167 to 191 (KLSSTKKRPDTCAPTDDSRKNREPR) show a composition bias toward basic and acidic residues. Over residues 337–352 (EKVKLKGERPAQNKKE) the composition is skewed to basic and acidic residues. Residues 377–390 (KSVKKSAKQQKPRV) show a composition bias toward basic residues. Residues 409–419 (TQDKQSTHEMI) show a composition bias toward basic and acidic residues. Positions 422-446 (QAKTISEASGQQTSQVQSSLSPNNI) are enriched in polar residues. Basic and acidic residues predominate over residues 652–662 (RNQRDEATAAR).

Component of the Rhino-Deadlock-Cutoff (RDC) complex, composed of rhi/rhino, del/deadlock and cuff/cutoff. Interacts (via N-terminus) with rhi/rhino (via C-terminus); this interaction is direct. Interacts (via C-terminus) with cuff/cutoff; this interaction is direct.

The protein resides in the nucleus. It localises to the cytoplasm. The protein localises to the cytoskeleton. It is found in the microtubule organizing center. Its subcellular location is the centrosome. The protein resides in the chromosome. Developmental protein involved in oogenesis. Required for germline maintenance, stability of mitotic spindles, localization of patterning determinants, oocyte growth and fusome biogenesis in males and females. Also required for dorso-ventral and antero-posterior patterning of oocyte and eggshell. May be involved in microtubule function during oogenesis. Part of a rhi-dependent transcription machinery that enables the generation of piRNA precursors from heterochromatin while maintaining the suppression of transposon-encoded promoters and enhancers. Component of the RDC complex (rhi, del and cuff) which binds to repressive H3K9me3 marks in the piRNA clusters. RDC promotes the bidirectional transcription of piRNA clusters at these sites by interacting with Moonshiner which forms a complex with the transcription initiation factors TfIIA-S and Trf2. This mechanism allows transcription to occur in piRNA clusters despite the lack of proper promoter elements and in the presence of the repressive H3K9me3 mark. As part of the RDC complex, involved in suppression of splicing. This Drosophila melanogaster (Fruit fly) protein is Protein deadlock (del).